A 104-amino-acid polypeptide reads, in one-letter code: MKFRPLHDRVVIRRAEGDTKSKGGIIIPDNAKEKPQEGEVIAVGPGARDENGALVPLDVKAGDLILFGKWSGTEVKIDGEDLLIMKEADIMGVIDKSVEAKKAA.

The protein belongs to the GroES chaperonin family. In terms of assembly, heptamer of 7 subunits arranged in a ring. Interacts with the chaperonin GroEL.

The protein localises to the cytoplasm. Functionally, together with the chaperonin GroEL, plays an essential role in assisting protein folding. The GroEL-GroES system forms a nano-cage that allows encapsulation of the non-native substrate proteins and provides a physical environment optimized to promote and accelerate protein folding. GroES binds to the apical surface of the GroEL ring, thereby capping the opening of the GroEL channel. The chain is Co-chaperonin GroES 1 from Mesorhizobium japonicum (strain LMG 29417 / CECT 9101 / MAFF 303099) (Mesorhizobium loti (strain MAFF 303099)).